A 330-amino-acid chain; its full sequence is D-lactate dehydrogenase (330 aa).

Residues 156-157, aspartate 176, 206-207, 233-235, and aspartate 259 each bind NAD(+); these read RI, VP, and AAR. The active site involves arginine 235. Glutamate 264 is a catalytic residue. Residue histidine 296 is the Proton donor of the active site.

Belongs to the D-isomer specific 2-hydroxyacid dehydrogenase family.

It carries out the reaction (R)-lactate + NAD(+) = pyruvate + NADH + H(+). The chain is D-lactate dehydrogenase (ldhD) from Staphylococcus aureus (strain MSSA476).